The primary structure comprises 292 residues: Coiled-coil domain-containing protein 137 (292 aa).

Residues methionine 1–threonine 16 show a composition bias toward low complexity. 4 disordered regions span residues methionine 1 to alanine 94, phenylalanine 139 to alanine 183, proline 205 to serine 243, and alanine 263 to leucine 292. Composition is skewed to basic and acidic residues over residues lysine 57 to methionine 78, proline 155 to lysine 164, and lysine 173 to alanine 183. Positions lysine 156–threonine 194 form a coiled coil. Residues lysine 222–serine 232 show a composition bias toward low complexity. A Phosphoserine modification is found at serine 232. A compositionally biased stretch (polar residues) spans glycine 234–serine 243. The stretch at glutamine 247–serine 276 forms a coiled coil.

The protein resides in the chromosome. The polypeptide is Coiled-coil domain-containing protein 137 (CCDC137) (Bos taurus (Bovine)).